The following is a 406-amino-acid chain: MDPTLTELLHSNLQWIFVGGKGGVGKTTTSCALATLFATTPISDAAAPDGTRPRRVLLISTDPAHNLSDAFNQRFGPQPTPVKGLEDTLAAMEVDPKNFTHGALMSSLTGANSGGSASSLSREAEADAVEQTASFARIGAVLKEAARTMPGIDEISVFAEILHYVRTLSYDLLIFDTAPTGHTLRLLALPQTLNSTFDRLMSLEGLAPMLEAASHLIGSSLGAVGGDSVSGCEVATAMPSSSSTAPGAGSAATGSSQGSWSITADEVRAKALHWRQVMEEVQDRFNDPSRTSFVCVCIAEFLSVYETERLVQELMKYNIGCDSIVVNQLVLKPSSEPPCRMCAARQKIQTKYLEQIDLLYDDFHVVKMPLLSDEVRGIPALKMFARFLQEPYNPDTHGYIDVQESC.

Residue Lys21 to Thr28 coordinates ATP. Asp62 is an active-site residue. Residues Glu300 and Asn327 each coordinate ATP. Positions 339 and 342 each coordinate Zn(2+).

This sequence belongs to the arsA ATPase family. In terms of assembly, homodimer.

The protein resides in the cytoplasm. It is found in the endoplasmic reticulum. ATPase required for the post-translational delivery of tail-anchored (TA) proteins to the endoplasmic reticulum. Recognizes and selectively binds the transmembrane domain of TA proteins in the cytosol. This complex then targets to the endoplasmic reticulum by membrane-bound receptors, where the tail-anchored protein is released for insertion. This process is regulated by ATP binding and hydrolysis. ATP binding drives the homodimer towards the closed dimer state, facilitating recognition of newly synthesized TA membrane proteins. ATP hydrolysis is required for insertion. Subsequently, the homodimer reverts towards the open dimer state, lowering its affinity for the membrane-bound receptor, and returning it to the cytosol to initiate a new round of targeting. This chain is ATPase ASNA1 homolog, found in Leishmania braziliensis.